Consider the following 496-residue polypeptide: Glutamyl-tRNA(Gln) amidotransferase subunit A (496 aa).

Residues Lys-75 and Ser-150 each act as charge relay system in the active site. Catalysis depends on Ser-174, which acts as the Acyl-ester intermediate.

The protein belongs to the amidase family. GatA subfamily. Heterotrimer of A, B and C subunits.

It catalyses the reaction L-glutamyl-tRNA(Gln) + L-glutamine + ATP + H2O = L-glutaminyl-tRNA(Gln) + L-glutamate + ADP + phosphate + H(+). Allows the formation of correctly charged Gln-tRNA(Gln) through the transamidation of misacylated Glu-tRNA(Gln) in organisms which lack glutaminyl-tRNA synthetase. The reaction takes place in the presence of glutamine and ATP through an activated gamma-phospho-Glu-tRNA(Gln). The polypeptide is Glutamyl-tRNA(Gln) amidotransferase subunit A (Burkholderia lata (strain ATCC 17760 / DSM 23089 / LMG 22485 / NCIMB 9086 / R18194 / 383)).